Consider the following 572-residue polypeptide: Proline--tRNA ligase (572 aa).

Belongs to the class-II aminoacyl-tRNA synthetase family. ProS type 1 subfamily. Homodimer.

The protein localises to the cytoplasm. It catalyses the reaction tRNA(Pro) + L-proline + ATP = L-prolyl-tRNA(Pro) + AMP + diphosphate. Catalyzes the attachment of proline to tRNA(Pro) in a two-step reaction: proline is first activated by ATP to form Pro-AMP and then transferred to the acceptor end of tRNA(Pro). As ProRS can inadvertently accommodate and process non-cognate amino acids such as alanine and cysteine, to avoid such errors it has two additional distinct editing activities against alanine. One activity is designated as 'pretransfer' editing and involves the tRNA(Pro)-independent hydrolysis of activated Ala-AMP. The other activity is designated 'posttransfer' editing and involves deacylation of mischarged Ala-tRNA(Pro). The misacylated Cys-tRNA(Pro) is not edited by ProRS. This is Proline--tRNA ligase from Yersinia pseudotuberculosis serotype O:1b (strain IP 31758).